Consider the following 328-residue polypeptide: DNA-directed RNA polymerase subunit alpha (328 aa).

The interval 1–234 (MQNSTTEFLK…DQMSIFADLQ (234 aa)) is alpha N-terminal domain (alpha-NTD). The tract at residues 248-328 (IDPVLLRPVD…AWPPVGLEKP (81 aa)) is alpha C-terminal domain (alpha-CTD).

It belongs to the RNA polymerase alpha chain family. As to quaternary structure, homodimer. The RNAP catalytic core consists of 2 alpha, 1 beta, 1 beta' and 1 omega subunit. When a sigma factor is associated with the core the holoenzyme is formed, which can initiate transcription.

The enzyme catalyses RNA(n) + a ribonucleoside 5'-triphosphate = RNA(n+1) + diphosphate. Functionally, DNA-dependent RNA polymerase catalyzes the transcription of DNA into RNA using the four ribonucleoside triphosphates as substrates. The chain is DNA-directed RNA polymerase subunit alpha from Neisseria meningitidis serogroup A / serotype 4A (strain DSM 15465 / Z2491).